The chain runs to 1909 residues: MVPNTCTSVPLLPVGLPLLLLLSCIQFSSQADSLPNFVRSPEDQTGISGGVASFVCQAAGEPKPRITWMKKGKKVSSQRFEVIEFDDGSGSVLRIQPLRTHRDEAIYECTATNSLGEINTSAKLTVLEENQIPHGFPTIDMGPQLKVVERTRTTTMLCAASGNPDPEITWFKDFLPVDINGNGRIKQLRSGALQIENSEESDQGKYECVATNSAGTRYSAPANLYVRVRRVPPRFSIPPTNHEVMPGGSVNLTCVAVGAPMPYVKWMTGEVELTKDEEMPVGRNVLELTNIRQSTNYTCVAISSLGMIEATAQVSVKALPKPPTSLTVTETTATSVTLTWDSGNPEPVSYYIIQYRAKTSDTNFQEVDGVATTRYSIGGLSPYSEYEFRVMAVNNIGRGPPSEPVETRTGEQAPSSPPLHVQARMLSASTMLVQWEPPEEPNGQIRGYRIYYTSDLDAPLSAWQKHNTDDSRLTTISSLTTGITYSLRVLGFTSVGDGPPSDVLQVKTQQGVPAQPSSFEAEAELDTRILLTWLWPVQDPIIKYELQYWEADSDNKIHVTFDPAGSYAVEGLKPDTLYKFSLAARSEMGQGVFTHPIEARTAQSAPSAPPQDVHLLSLSSTSIKVSWVAPPAASRHGAIVRYTVSYQAVNGEDTERHEVPDIGADASSCVLEGLEKWTEYQVWVRAHTDVGPGPESTAVRIRTNEDVPGAPPRKLEVEALNSTAIRVTWKPPLSGKQHGQIRGYQVIYSRLENGEPRGHPNIMDVALPEAQWKIEESTEYEAVIAGLASETSYSVTVAAYTTKGDGARSKAKVVTTTGAVPGKPTMIISTTVGNTALIQWQPPKDMVGELMGYRLRYKRLEEENYEIREFSRTDDHHTVTDLHKGATYSFHLSARNRAGLGEEYVKDIGTPEDVPSGFPLNLQVVGLTTSTTRLTWEPPALSERNGRIIHYIVVYRDINSKQNSTNRTSDTQMTIQGLRPDTTYDIRVQAFTSKGGGPISPSIQSRTMSTSPAFATSFGVKAVMKTSVLLTWEVPENYKSQVPFKILYNQQSVEVQGNLKRKLITRLQPDTDYSFVLMSRGNSAGGLQQQVSIRTAPDLFKTKPVLYTADQTNNGKLTINLPKVPTSAPVRCYYIVVVPVSQTSSRQWINPDEMELDELLESSEGAHLRRRRRHTDTVRPYIAAKLSTLPETFTLGDELDYSGFINRPLPNNQHFQCFVMAELKDQYPVTANEKQRTFSASPYSDPIIVQGENQMQRSVDQPEMLWVMGPVLAVVLIIIIVIAILLFKRKRASPLPKDDHSGGVKDCLLASSSDPVEMRRLNYQTPGMREHPPISVSELADHIERLKANDALRFSQEYESIDPGQQFTWENSNLEVNKPKNRYANVIAYDHSRVVLTPVDGVPGSDYINSNYIDGYRKQNAYIATQGPLPETLSDFWRMIWEQRASTIVMMTRLEEKSRVKCDQYWPIRGTETYGMIQVTMLDAVELATYSVRTFALYKNGSSEKREVRQFQFMAWPDHGVPEYPTPILAFLRRVKACNPPDAGPMVVHCSAGVGRTGCFIVIDAMLERMKHEKTVDIYGHVTCMRSQRNYMVQTEDQYIFIHEALLEAATCGNTEVPARNLYAHIQKLTQPSAGETVTAMELEFKRLANSKAHTSRFISANLPCNKFKNRLVNIMPFESTRVCLQPIRGVEGSDYINASCIDGYRQQKAYIATQGPLAETTEDFWRMLWEHNSTIVVMLTKLREMGREKCHQYWPAERSARYQYFVVDPMAEYNMPQYILREFKVTDARDGQSRTIRQFQFTDWPEQGVPKTGEGFIDFIGQVHKTKEQFGQDGPITVHCSAGVGRTGVFITLSIVLERMRYEGVVDLFQTVKTLRTQRPAMVQTEDQYQLCYRAALEYLGSFDHYAT.

Positions 1–31 are cleaved as a signal peptide; the sequence is MVPNTCTSVPLLPVGLPLLLLLSCIQFSSQA. The Extracellular segment spans residues 32–1266; that stretch reads DSLPNFVRSP…RSVDQPEMLW (1235 aa). 3 consecutive Ig-like C2-type domains span residues 35–125, 137–225, and 233–315; these read PNFV…AKLT, PTID…ANLY, and PRFS…AQVS. A disulfide bond links C56 and C109. 68–77 serves as a coordination point for heparin; the sequence is WMKKGKKVSS. N119 carries an N-linked (GlcNAc...) asparagine glycan. Residues C158 and C208 are joined by a disulfide bond. N-linked (GlcNAc...) asparagine glycans are attached at residues N251 and N296. An intrachain disulfide couples C254 to C299. Fibronectin type-III domains are found at residues 322–412, 417–511, 515–604, 609–706, 711–819, 820–914, 918–1013, and 1014–1098; these read PPTS…TGEQ, PPLH…TQQG, QPSS…TAQS, PPQD…TNED, PPRK…TTGA, VPGK…PEDV, FPLN…TSPA, and FATS…TAPD. The segment at 399–418 is disordered; that stretch reads GPPSEPVETRTGEQAPSSPP. The N-linked (GlcNAc...) asparagine glycan is linked to N721. N-linked (GlcNAc...) asparagine glycans are attached at residues N963 and N966. Residues 1267–1287 traverse the membrane as a helical segment; it reads VMGPVLAVVLIIIIVIAILLF. The Cytoplasmic portion of the chain corresponds to 1288-1909; the sequence is KRKRASPLPK…YLGSFDHYAT (622 aa). Tyrosine-protein phosphatase domains follow at residues 1354 to 1609 and 1641 to 1900; these read FSQE…LLEA and MELE…ALEY. Substrate contacts are provided by residues D1518, 1550 to 1556, and Q1594; that span reads CSAGVGR. C1550 functions as the Phosphocysteine intermediate in the catalytic mechanism. C1841 (phosphocysteine intermediate) is an active-site residue.

Belongs to the protein-tyrosine phosphatase family. Receptor class 2A subfamily.

It localises to the membrane. The enzyme catalyses O-phospho-L-tyrosyl-[protein] + H2O = L-tyrosyl-[protein] + phosphate. Possible cell adhesion receptor. It possesses an intrinsic protein tyrosine phosphatase activity (PTPase). In terms of biological role, the first PTPase domain has enzymatic activity, while the second one seems to affect the substrate specificity of the first one. This Danio rerio (Zebrafish) protein is Receptor-type tyrosine-protein phosphatase F (ptprf).